The primary structure comprises 349 residues: Alanine racemase (349 aa).

Residue Lys-35 is the Proton acceptor; specific for D-alanine of the active site. The residue at position 35 (Lys-35) is an N6-(pyridoxal phosphate)lysine. Arg-130 is a substrate binding site. The active-site Proton acceptor; specific for L-alanine is the Tyr-244. Substrate is bound at residue Met-292.

This sequence belongs to the alanine racemase family. The cofactor is pyridoxal 5'-phosphate.

The catalysed reaction is L-alanine = D-alanine. Its pathway is amino-acid biosynthesis; D-alanine biosynthesis; D-alanine from L-alanine: step 1/1. Functionally, catalyzes the interconversion of L-alanine and D-alanine. May also act on other amino acids. This chain is Alanine racemase (alr), found in Cereibacter sphaeroides (strain ATCC 17023 / DSM 158 / JCM 6121 / CCUG 31486 / LMG 2827 / NBRC 12203 / NCIMB 8253 / ATH 2.4.1.) (Rhodobacter sphaeroides).